The following is a 513-amino-acid chain: Putative thymidine phosphorylase 2 (513 aa).

It belongs to the thymidine/pyrimidine-nucleoside phosphorylase family. Type 2 subfamily.

It catalyses the reaction thymidine + phosphate = 2-deoxy-alpha-D-ribose 1-phosphate + thymine. The protein is Putative thymidine phosphorylase 2 of Acidovorax sp. (strain JS42).